A 171-amino-acid polypeptide reads, in one-letter code: S-ribosylhomocysteine lyase (171 aa).

Fe cation contacts are provided by histidine 54, histidine 58, and cysteine 128.

The protein belongs to the LuxS family. As to quaternary structure, homodimer. It depends on Fe cation as a cofactor.

It catalyses the reaction S-(5-deoxy-D-ribos-5-yl)-L-homocysteine = (S)-4,5-dihydroxypentane-2,3-dione + L-homocysteine. In terms of biological role, involved in the synthesis of autoinducer 2 (AI-2) which is secreted by bacteria and is used to communicate both the cell density and the metabolic potential of the environment. The regulation of gene expression in response to changes in cell density is called quorum sensing. Catalyzes the transformation of S-ribosylhomocysteine (RHC) to homocysteine (HC) and 4,5-dihydroxy-2,3-pentadione (DPD). The polypeptide is S-ribosylhomocysteine lyase (Aliarcobacter butzleri (strain RM4018) (Arcobacter butzleri)).